Reading from the N-terminus, the 391-residue chain is Casein kinase II subunit alpha (391 aa).

The interaction with beta subunit stretch occupies residues 36-41; it reads QDDYQL. Residues 39-324 enclose the Protein kinase domain; it reads YQLVRKLGRG…AREAMEHPYF (286 aa). Residues 45–53 and Lys-68 contribute to the ATP site; that span reads LGRGKYSEV. The Proton acceptor role is filled by Asp-156. Residues Thr-344 and Thr-360 each carry the phosphothreonine; by CDK1 modification. Phosphoserine; by CDK1 is present on residues Ser-362 and Ser-370.

The protein belongs to the protein kinase superfamily. Ser/Thr protein kinase family. CK2 subfamily. In terms of assembly, heterotetramer composed of two catalytic subunits (alpha chain and/or alpha' chain) and two regulatory subunits (beta chains). The tetramer can exist as a combination of 2 alpha/2 beta, 2 alpha'/2 beta or 1 alpha/1 alpha'/2 beta subunits. Also part of a CK2-SPT16-SSRP1 complex composed of SSRP1, SUPT16H, CSNK2A1, CSNK2A2 and CSNK2B, which forms following UV irradiation. Interacts with RNPS1. Interacts with SNAI1. Interacts with PML. Interacts with CCAR2. Interacts with HIRIP3. Post-translationally, phosphorylated at Thr-344, Thr-360, Ser-362 and Ser-370 by CDK1 in prophase and metaphase and dephosphorylated during anaphase. Phosphorylation does not directly affect casein kinase 2 activity, but may contribute to its regulation by forming binding sites for interacting proteins and/or targeting it to different compartments.

The protein resides in the nucleus. It carries out the reaction L-seryl-[protein] + ATP = O-phospho-L-seryl-[protein] + ADP + H(+). It catalyses the reaction L-threonyl-[protein] + ATP = O-phospho-L-threonyl-[protein] + ADP + H(+). With respect to regulation, constitutively active protein kinase whose activity is not directly affected by phosphorylation. Seems to be regulated by level of expression and localization. Catalytic subunit of a constitutively active serine/threonine-protein kinase complex that phosphorylates a large number of substrates containing acidic residues C-terminal to the phosphorylated serine or threonine. Regulates numerous cellular processes, such as cell cycle progression, apoptosis and transcription, as well as viral infection. May act as a regulatory node which integrates and coordinates numerous signals leading to an appropriate cellular response. During mitosis, functions as a component of the p53/TP53-dependent spindle assembly checkpoint (SAC) that maintains cyclin-B-CDK1 activity and G2 arrest in response to spindle damage. Also required for p53/TP53-mediated apoptosis, phosphorylating 'Ser-392' of p53/TP53 following UV irradiation. Phosphorylates a number of DNA repair proteins in response to DNA damage, such as MDC1, MRE11, RAD9A, RAD51 and HTATSF1, promoting their recruitment to DNA damage sites. Can also negatively regulate apoptosis. Phosphorylates the caspases CASP9 and CASP2 and the apoptotic regulator NOL3. Phosphorylation protects CASP9 from cleavage and activation by CASP8, and inhibits the dimerization of CASP2 and activation of CASP8. Phosphorylates YY1, protecting YY1 from cleavage by CASP7 during apoptosis. Regulates transcription by direct phosphorylation of RNA polymerases I, II, III and IV. Also phosphorylates and regulates numerous transcription factors including NF-kappa-B, STAT1, CREB1, IRF1, IRF2, ATF1, ATF4, SRF, MAX, JUN, FOS, MYC and MYB. Phosphorylates Hsp90 and its co-chaperones FKBP4 and CDC37, which is essential for chaperone function. Mediates sequential phosphorylation of FNIP1, promoting its gradual interaction with Hsp90, leading to activate both kinase and non-kinase client proteins of Hsp90. Regulates Wnt signaling by phosphorylating CTNNB1 and the transcription factor LEF1. Acts as an ectokinase that phosphorylates several extracellular proteins. Plays an important role in the circadian clock function by phosphorylating BMAL1 at 'Ser-90' which is pivotal for its interaction with CLOCK and which controls CLOCK nuclear entry. Phosphorylates FMR1, promoting FMR1-dependent formation of a membraneless compartment. May phosphorylate histone H2A on 'Ser-1'. This Bos taurus (Bovine) protein is Casein kinase II subunit alpha (CSNK2A1).